Here is a 346-residue protein sequence, read N- to C-terminus: Coproporphyrin III ferrochelatase (346 aa).

Fe-coproporphyrin III is bound by residues Ser52 and Tyr121. Fe(2+)-binding residues include His181 and Glu264.

The protein belongs to the ferrochelatase family.

The protein resides in the cytoplasm. The enzyme catalyses Fe-coproporphyrin III + 2 H(+) = coproporphyrin III + Fe(2+). It functions in the pathway porphyrin-containing compound metabolism; protoheme biosynthesis. Involved in coproporphyrin-dependent heme b biosynthesis. Catalyzes the insertion of ferrous iron into coproporphyrin III to form Fe-coproporphyrin III. The protein is Coproporphyrin III ferrochelatase of Mycobacterium sp. (strain KMS).